Reading from the N-terminus, the 310-residue chain is 2-methoxy-6-polyprenyl-1,4-benzoquinol methylase, mitochondrial (310 aa).

The N-terminal 6 residues, 1-6, are a transit peptide targeting the mitochondrion; the sequence is MAHMRS. Residues threonine 99, aspartate 154, and 182–183 each bind S-adenosyl-L-methionine; that span reads DA.

This sequence belongs to the class I-like SAM-binding methyltransferase superfamily. MenG/UbiE family. Component of a multi-subunit COQ enzyme complex, composed of at least coq3, coq4, coq5, coq6, coq7 and coq9.

It localises to the mitochondrion inner membrane. It catalyses the reaction a 2-methoxy-6-(all-trans-polyprenyl)benzene-1,4-diol + S-adenosyl-L-methionine = a 5-methoxy-2-methyl-3-(all-trans-polyprenyl)benzene-1,4-diol + S-adenosyl-L-homocysteine + H(+). Its pathway is cofactor biosynthesis; ubiquinone biosynthesis. In terms of biological role, methyltransferase required for the conversion of 2-polyprenyl-6-methoxy-1,4-benzoquinol (DDMQH2) to 2-polyprenyl-3-methyl-6-methoxy-1,4-benzoquinol (DMQH2). The polypeptide is 2-methoxy-6-polyprenyl-1,4-benzoquinol methylase, mitochondrial (Xenopus laevis (African clawed frog)).